Reading from the N-terminus, the 149-residue chain is Deoxyuridine 5'-triphosphate nucleotidohydrolase (149 aa).

Residues 68–70 (RSG), Asn-81, 85–87 (TVD), and Lys-95 each bind substrate.

It belongs to the dUTPase family. Requires Mg(2+) as cofactor.

It carries out the reaction dUTP + H2O = dUMP + diphosphate + H(+). It functions in the pathway pyrimidine metabolism; dUMP biosynthesis; dUMP from dCTP (dUTP route): step 2/2. Its function is as follows. This enzyme is involved in nucleotide metabolism: it produces dUMP, the immediate precursor of thymidine nucleotides and it decreases the intracellular concentration of dUTP so that uracil cannot be incorporated into DNA. The protein is Deoxyuridine 5'-triphosphate nucleotidohydrolase of Neorickettsia sennetsu (strain ATCC VR-367 / Miyayama) (Ehrlichia sennetsu).